Consider the following 511-residue polypeptide: Bifunctional purine biosynthesis protein PurH (511 aa).

The MGS-like domain maps to 1-145; it reads MKRRAIISVS…KNHAYVTAVV (145 aa).

It belongs to the PurH family.

It carries out the reaction (6R)-10-formyltetrahydrofolate + 5-amino-1-(5-phospho-beta-D-ribosyl)imidazole-4-carboxamide = 5-formamido-1-(5-phospho-D-ribosyl)imidazole-4-carboxamide + (6S)-5,6,7,8-tetrahydrofolate. It catalyses the reaction IMP + H2O = 5-formamido-1-(5-phospho-D-ribosyl)imidazole-4-carboxamide. The protein operates within purine metabolism; IMP biosynthesis via de novo pathway; 5-formamido-1-(5-phospho-D-ribosyl)imidazole-4-carboxamide from 5-amino-1-(5-phospho-D-ribosyl)imidazole-4-carboxamide (10-formyl THF route): step 1/1. Its pathway is purine metabolism; IMP biosynthesis via de novo pathway; IMP from 5-formamido-1-(5-phospho-D-ribosyl)imidazole-4-carboxamide: step 1/1. The sequence is that of Bifunctional purine biosynthesis protein PurH from Anoxybacillus flavithermus (strain DSM 21510 / WK1).